Consider the following 370-residue polypeptide: Gibberellin 2-beta-dioxygenase 2 (370 aa).

One can recognise a Fe2OG dioxygenase domain in the interval aspartate 186–proline 306. Tyrosine 196 lines the 2-oxoglutarate pocket. Positions 224, 226, and 287 each coordinate Fe cation. The 2-oxoglutarate site is built by arginine 297 and serine 299.

It belongs to the iron/ascorbate-dependent oxidoreductase family. GA2OX subfamily. Requires Fe(2+) as cofactor.

It carries out the reaction gibberellin A1 + 2-oxoglutarate + O2 = gibberellin A8 + succinate + CO2. Its function is as follows. Catalyzes the 2-beta-hydroxylation of several biologically active gibberellins, leading to the homeostatic regulation of their endogenous level. Catabolism of gibberellins (GAs) plays a central role in plant development. This chain is Gibberellin 2-beta-dioxygenase 2, found in Oryza sativa subsp. japonica (Rice).